A 316-amino-acid polypeptide reads, in one-letter code: Ribose-phosphate pyrophosphokinase (316 aa).

Residues 42–44 and 101–102 contribute to the ATP site; these read DGE and RQ. Mg(2+) contacts are provided by histidine 135 and aspartate 174. Lysine 197 is an active-site residue. Residues arginine 199, aspartate 223, and 227-231 each bind D-ribose 5-phosphate; that span reads DTAGT.

This sequence belongs to the ribose-phosphate pyrophosphokinase family. Class I subfamily. In terms of assembly, homohexamer. It depends on Mg(2+) as a cofactor.

Its subcellular location is the cytoplasm. The catalysed reaction is D-ribose 5-phosphate + ATP = 5-phospho-alpha-D-ribose 1-diphosphate + AMP + H(+). The protein operates within metabolic intermediate biosynthesis; 5-phospho-alpha-D-ribose 1-diphosphate biosynthesis; 5-phospho-alpha-D-ribose 1-diphosphate from D-ribose 5-phosphate (route I): step 1/1. Its function is as follows. Involved in the biosynthesis of the central metabolite phospho-alpha-D-ribosyl-1-pyrophosphate (PRPP) via the transfer of pyrophosphoryl group from ATP to 1-hydroxyl of ribose-5-phosphate (Rib-5-P). In Halalkalibacterium halodurans (strain ATCC BAA-125 / DSM 18197 / FERM 7344 / JCM 9153 / C-125) (Bacillus halodurans), this protein is Ribose-phosphate pyrophosphokinase.